A 396-amino-acid polypeptide reads, in one-letter code: Elongation factor Tu (396 aa).

The tr-type G domain occupies 11-205; that stretch reads KPHVNIGTIG…TVDEYVPTPE (195 aa). The tract at residues 20–27 is G1; that stretch reads GHVDHGKT. 20 to 27 serves as a coordination point for GTP; that stretch reads GHVDHGKT. T27 lines the Mg(2+) pocket. Residues 61 to 65 form a G2 region; it reads GITIN. Residues 82 to 85 form a G3 region; sequence DAPG. GTP-binding positions include 82 to 86 and 137 to 140; these read DAPGH and NKTD. The segment at 137–140 is G4; sequence NKTD. The segment at 175-177 is G5; that stretch reads SAL.

The protein belongs to the TRAFAC class translation factor GTPase superfamily. Classic translation factor GTPase family. EF-Tu/EF-1A subfamily. In terms of assembly, monomer.

It localises to the cytoplasm. It catalyses the reaction GTP + H2O = GDP + phosphate + H(+). Functionally, GTP hydrolase that promotes the GTP-dependent binding of aminoacyl-tRNA to the A-site of ribosomes during protein biosynthesis. This chain is Elongation factor Tu, found in Latilactobacillus sakei subsp. sakei (strain 23K) (Lactobacillus sakei subsp. sakei).